The primary structure comprises 151 residues: UPF0178 protein YaiI (151 aa).

Belongs to the UPF0178 family.

The sequence is that of UPF0178 protein YaiI from Salmonella paratyphi B (strain ATCC BAA-1250 / SPB7).